The primary structure comprises 336 residues: DNA-directed RNA polymerase subunit alpha (336 aa).

An alpha N-terminal domain (alpha-NTD) region spans residues 1–232; it reads MIQKNWQELI…DQLGVFVNFD (232 aa). Residues 248-336 form an alpha C-terminal domain (alpha-CTD) region; sequence FNPALLKKVD…DLAKRYEDQY (89 aa).

This sequence belongs to the RNA polymerase alpha chain family. As to quaternary structure, homodimer. The RNAP catalytic core consists of 2 alpha, 1 beta, 1 beta' and 1 omega subunit. When a sigma factor is associated with the core the holoenzyme is formed, which can initiate transcription.

The catalysed reaction is RNA(n) + a ribonucleoside 5'-triphosphate = RNA(n+1) + diphosphate. In terms of biological role, DNA-dependent RNA polymerase catalyzes the transcription of DNA into RNA using the four ribonucleoside triphosphates as substrates. In Rhizobium etli (strain CIAT 652), this protein is DNA-directed RNA polymerase subunit alpha.